The chain runs to 596 residues: Capsid protein VP1 (596 aa).

This sequence belongs to the microviridae F protein family.

It localises to the virion. The protein resides in the host cytoplasm. Functionally, assembles to form an icosahedral capsid with a T=1 symmetry. The protein is Capsid protein VP1 of Chlamydia phage 1 (Bacteriophage Chp1).